The primary structure comprises 286 residues: Ribosome-inactivating protein momordin I (286 aa).

The first 23 residues, 1–23 (MSRFSVLSFLILAIFLGGSIVKG), serve as a signal peptide directing secretion. Glu-183 is an active-site residue. N-linked (GlcNAc...) asparagine glycosylation is present at Asn-250. Residues 270-286 (AEGDNGDVSTTHGFSSY) constitute a propeptide, removed in mature form.

The protein belongs to the ribosome-inactivating protein family. Type 1 RIP subfamily.

The enzyme catalyses Endohydrolysis of the N-glycosidic bond at one specific adenosine on the 28S rRNA.. This chain is Ribosome-inactivating protein momordin I, found in Momordica charantia (Bitter gourd).